Here is a 711-residue protein sequence, read N- to C-terminus: Arginine decarboxylase 2 (711 aa).

N6-(pyridoxal phosphate)lysine is present on lysine 147. Position 331-341 (331-341 (IDIGGGLGIDY)) interacts with substrate. The tract at residues 642–661 (MHTKGGSEGENEEEEEDDEF) is disordered. A compositionally biased stretch (acidic residues) spans 650 to 661 (GENEEEEEDDEF).

Belongs to the Orn/Lys/Arg decarboxylase class-II family. SpeA subfamily. Homodimer and heterodimer with ADC1. Pyridoxal 5'-phosphate serves as cofactor. The cofactor is Mg(2+).

It localises to the plastid. It is found in the chloroplast. The protein resides in the cytoplasm. Its subcellular location is the cytosol. The enzyme catalyses L-arginine + H(+) = agmatine + CO2. The protein operates within amine and polyamine biosynthesis; agmatine biosynthesis; agmatine from L-arginine: step 1/1. Its function is as follows. Required for the biosynthesis of putrescine. Catalyzes the first step of polyamine (PA) biosynthesis to produce putrescine from arginine. Is a major contributor to basal arginine decarboxylase (ADC) activity and putrescine biosynthesis. Accumulation of putrescine plays a positive role in salt stress tolerance. Accumulation of putrescine plays a positive role in freezing tolerance. Production of PA is essential for normal seed development. Controls PA homeostasis which is crucial for normal plant growth and development. The protein is Arginine decarboxylase 2 of Arabidopsis thaliana (Mouse-ear cress).